A 136-amino-acid polypeptide reads, in one-letter code: ATP synthase epsilon chain 2 (136 aa).

Belongs to the ATPase epsilon chain family. In terms of assembly, F-type ATPases have 2 components, CF(1) - the catalytic core - and CF(0) - the membrane proton channel. CF(1) has five subunits: alpha(3), beta(3), gamma(1), delta(1), epsilon(1). CF(0) has three main subunits: a, b and c.

Its subcellular location is the cell inner membrane. Its function is as follows. Produces ATP from ADP in the presence of a proton gradient across the membrane. The protein is ATP synthase epsilon chain 2 of Nitrobacter hamburgensis (strain DSM 10229 / NCIMB 13809 / X14).